Here is a 631-residue protein sequence, read N- to C-terminus: Probable potassium transport system protein Kup (631 aa).

A run of 12 helical transmembrane segments spans residues 17–37 (IGLL…SPLY), 56–76 (ILGV…FKYM), 109–129 (MMMV…SMIT), 147–167 (GLDH…FLIQ), 174–194 (IGVL…ALGV), 215–235 (FFII…LALT), 256–276 (WFIL…ALVL), 288–308 (LLAP…ATII), 346–366 (IYIG…VIGF), 378–398 (VAVT…MLML), 403–423 (PLLA…FFAA), and 428–448 (IFQG…LMTT).

The protein belongs to the HAK/KUP transporter (TC 2.A.72) family.

Its subcellular location is the cell inner membrane. The enzyme catalyses K(+)(in) + H(+)(in) = K(+)(out) + H(+)(out). Its function is as follows. Transport of potassium into the cell. Likely operates as a K(+):H(+) symporter. The sequence is that of Probable potassium transport system protein Kup from Pseudomonas syringae pv. tomato (strain ATCC BAA-871 / DC3000).